The chain runs to 475 residues: Pentatricopeptide repeat-containing protein At1g29710, mitochondrial (475 aa).

A mitochondrion-targeting transit peptide spans 1 to 37 (MVRLWCGKLRLWKPYLALATQSRNSWFCSGGGAPSHH). PPR repeat units follow at residues 83 to 117 (AQNV…GYAM), 118 to 148 (DLIR…IIAL), 153 to 183 (DVGA…MPEW), 184 to 218 (NSGT…GNKP), 219 to 254 (NGEI…GIVP), and 255 to 285 (SMEH…MPME). Residues 350 to 380 (YFYSTFRPVDSSHPQMNIIYETLMSLRSQLK) are type E(+) motif. The tract at residues 381–475 (EMGYVPDTRY…NGVCRCNNLW (95 aa)) is type DYW motif.

It belongs to the PPR family. PCMP-H subfamily.

It localises to the mitochondrion. This is Pentatricopeptide repeat-containing protein At1g29710, mitochondrial (PCMP-H67) from Arabidopsis thaliana (Mouse-ear cress).